A 37-amino-acid polypeptide reads, in one-letter code: Large ribosomal subunit protein bL36 (37 aa).

Belongs to the bacterial ribosomal protein bL36 family.

The protein is Large ribosomal subunit protein bL36 of Heliobacterium modesticaldum (strain ATCC 51547 / Ice1).